We begin with the raw amino-acid sequence, 173 residues long: Regulatory protein RecX (173 aa).

The protein belongs to the RecX family.

It is found in the cytoplasm. In terms of biological role, modulates RecA activity. This is Regulatory protein RecX from Mycobacterium marinum (strain ATCC BAA-535 / M).